A 247-amino-acid chain; its full sequence is Glucosamine-6-phosphate deaminase (247 aa).

The active-site Proton acceptor; for enolization step is the aspartate 67. Asparagine 136 functions as the For ring-opening step in the catalytic mechanism. Histidine 138 (proton acceptor; for ring-opening step) is an active-site residue. Glutamate 143 functions as the For ring-opening step in the catalytic mechanism.

It belongs to the glucosamine/galactosamine-6-phosphate isomerase family. NagB subfamily.

It catalyses the reaction alpha-D-glucosamine 6-phosphate + H2O = beta-D-fructose 6-phosphate + NH4(+). It participates in amino-sugar metabolism; N-acetylneuraminate degradation; D-fructose 6-phosphate from N-acetylneuraminate: step 5/5. Catalyzes the reversible isomerization-deamination of glucosamine 6-phosphate (GlcN6P) to form fructose 6-phosphate (Fru6P) and ammonium ion. The protein is Glucosamine-6-phosphate deaminase of Shouchella clausii (strain KSM-K16) (Alkalihalobacillus clausii).